The primary structure comprises 330 residues: Peroxidase 55 (330 aa).

The first 30 residues, 1 to 30 (MDIRSDDAKKPMMMWFLGMLLFSMVAESNA), serve as a signal peptide directing secretion. 4 cysteine pairs are disulfide-bonded: Cys41/Cys121, Cys74/Cys79, Cys127/Cys326, and Cys206/Cys238. The Proton acceptor role is filled by His72. The Ca(2+) site is built by Asp73, Val76, Gly78, Asp80, and Ser82. Pro169 serves as a coordination point for substrate. His199 serves as a coordination point for heme b. Thr200 is a Ca(2+) binding site. A glycan (N-linked (GlcNAc...) asparagine) is linked at Asn215. The Ca(2+) site is built by Asp250, Ser253, and Asp258.

It belongs to the peroxidase family. Classical plant (class III) peroxidase subfamily. It depends on heme b as a cofactor. Ca(2+) serves as cofactor. Slightly expressed in roots.

It is found in the secreted. It catalyses the reaction 2 a phenolic donor + H2O2 = 2 a phenolic radical donor + 2 H2O. Functionally, removal of H(2)O(2), oxidation of toxic reductants, biosynthesis and degradation of lignin, suberization, auxin catabolism, response to environmental stresses such as wounding, pathogen attack and oxidative stress. These functions might be dependent on each isozyme/isoform in each plant tissue. The chain is Peroxidase 55 (PER55) from Arabidopsis thaliana (Mouse-ear cress).